Reading from the N-terminus, the 595-residue chain is Aspartate--tRNA(Asp/Asn) ligase (595 aa).

Glu-175 contributes to the L-aspartate binding site. Residues 199–202 (QQYK) form an aspartate region. L-aspartate is bound by residues Arg-221 and His-454. Residue 221–223 (RDE) participates in ATP binding. Glu-488 is an ATP binding site. Arg-495 is an L-aspartate binding site. 540-543 (GIDR) is an ATP binding site.

Belongs to the class-II aminoacyl-tRNA synthetase family. Type 1 subfamily. As to quaternary structure, homodimer.

It localises to the cytoplasm. The enzyme catalyses tRNA(Asx) + L-aspartate + ATP = L-aspartyl-tRNA(Asx) + AMP + diphosphate. Functionally, aspartyl-tRNA synthetase with relaxed tRNA specificity since it is able to aspartylate not only its cognate tRNA(Asp) but also tRNA(Asn). Reaction proceeds in two steps: L-aspartate is first activated by ATP to form Asp-AMP and then transferred to the acceptor end of tRNA(Asp/Asn). This is Aspartate--tRNA(Asp/Asn) ligase from Agrobacterium fabrum (strain C58 / ATCC 33970) (Agrobacterium tumefaciens (strain C58)).